A 116-amino-acid chain; its full sequence is NADH-ubiquinone oxidoreductase chain 3 (116 aa).

The next 3 membrane-spanning stretches (helical) occupy residues 3–23 (LVTTIITITITLSAVLATISF), 56–76 (FFLIAILFLLFDLEIALLLPL), and 84–104 (APTLTLLWSTAVLALLTLGLI).

This sequence belongs to the complex I subunit 3 family.

It localises to the mitochondrion membrane. It carries out the reaction a ubiquinone + NADH + 5 H(+)(in) = a ubiquinol + NAD(+) + 4 H(+)(out). In terms of biological role, core subunit of the mitochondrial membrane respiratory chain NADH dehydrogenase (Complex I) that is believed to belong to the minimal assembly required for catalysis. Complex I functions in the transfer of electrons from NADH to the respiratory chain. The immediate electron acceptor for the enzyme is believed to be ubiquinone. This Oncorhynchus nerka (Sockeye salmon) protein is NADH-ubiquinone oxidoreductase chain 3 (MT-ND3).